Reading from the N-terminus, the 338-residue chain is Fructose-1,6-bisphosphatase class 1 1 (338 aa).

Glu-88, Asp-107, Leu-109, and Asp-110 together coordinate Mg(2+). Substrate is bound by residues 110-113 (DGSS) and Asn-196. Glu-268 contacts Mg(2+).

Belongs to the FBPase class 1 family. In terms of assembly, homotetramer. It depends on Mg(2+) as a cofactor.

The protein resides in the cytoplasm. It carries out the reaction beta-D-fructose 1,6-bisphosphate + H2O = beta-D-fructose 6-phosphate + phosphate. It participates in carbohydrate biosynthesis; Calvin cycle. The sequence is that of Fructose-1,6-bisphosphatase class 1 1 from Bradyrhizobium sp. (strain BTAi1 / ATCC BAA-1182).